The following is a 92-amino-acid chain: Larval cuticle protein 9 (92 aa).

Positions 1–16 (MKFVIVLACLLAVVFA) are cleaved as a signal peptide. In terms of domain architecture, Chitin-binding type R&amp;R spans 31–92 (LLDFNYAYEL…TGYHPKVVEA (62 aa)).

Its function is as follows. Component of the cuticle of the larva. The protein is Larval cuticle protein 9 (Lcp9) of Drosophila melanogaster (Fruit fly).